Here is a 380-residue protein sequence, read N- to C-terminus: Glucose-1-phosphate adenylyltransferase (380 aa).

Alpha-D-glucose 1-phosphate-binding positions include G164, 179 to 180 (EK), and S190.

It belongs to the bacterial/plant glucose-1-phosphate adenylyltransferase family. As to quaternary structure, homotetramer.

The enzyme catalyses alpha-D-glucose 1-phosphate + ATP + H(+) = ADP-alpha-D-glucose + diphosphate. The protein operates within glycan biosynthesis; glycogen biosynthesis. In terms of biological role, involved in the biosynthesis of ADP-glucose, a building block required for the elongation reactions to produce glycogen. Catalyzes the reaction between ATP and alpha-D-glucose 1-phosphate (G1P) to produce pyrophosphate and ADP-Glc. The polypeptide is Glucose-1-phosphate adenylyltransferase (Streptococcus gordonii (strain Challis / ATCC 35105 / BCRC 15272 / CH1 / DL1 / V288)).